A 311-amino-acid chain; its full sequence is Putative S-adenosyl-L-methionine-dependent methyltransferase MSMEG_0095/MSMEI_0092 (311 aa).

S-adenosyl-L-methionine contacts are provided by residues Asp134 and 163–164; that span reads DL.

It belongs to the UPF0677 family.

Functionally, exhibits S-adenosyl-L-methionine-dependent methyltransferase activity. This chain is Putative S-adenosyl-L-methionine-dependent methyltransferase MSMEG_0095/MSMEI_0092, found in Mycolicibacterium smegmatis (strain ATCC 700084 / mc(2)155) (Mycobacterium smegmatis).